A 493-amino-acid polypeptide reads, in one-letter code: Glutamyl-tRNA(Gln) amidotransferase subunit A (493 aa).

Active-site charge relay system residues include K81 and S156. S180 serves as the catalytic Acyl-ester intermediate.

It belongs to the amidase family. GatA subfamily. In terms of assembly, heterotrimer of A, B and C subunits.

It carries out the reaction L-glutamyl-tRNA(Gln) + L-glutamine + ATP + H2O = L-glutaminyl-tRNA(Gln) + L-glutamate + ADP + phosphate + H(+). Allows the formation of correctly charged Gln-tRNA(Gln) through the transamidation of misacylated Glu-tRNA(Gln) in organisms which lack glutaminyl-tRNA synthetase. The reaction takes place in the presence of glutamine and ATP through an activated gamma-phospho-Glu-tRNA(Gln). In Mycolicibacterium paratuberculosis (strain ATCC BAA-968 / K-10) (Mycobacterium paratuberculosis), this protein is Glutamyl-tRNA(Gln) amidotransferase subunit A.